The following is a 182-amino-acid chain: Adenine phosphoribosyltransferase (182 aa).

The protein belongs to the purine/pyrimidine phosphoribosyltransferase family. Homodimer.

The protein resides in the cytoplasm. It carries out the reaction AMP + diphosphate = 5-phospho-alpha-D-ribose 1-diphosphate + adenine. Its pathway is purine metabolism; AMP biosynthesis via salvage pathway; AMP from adenine: step 1/1. Functionally, catalyzes a salvage reaction resulting in the formation of AMP, that is energically less costly than de novo synthesis. This Pseudomonas putida (strain GB-1) protein is Adenine phosphoribosyltransferase.